The chain runs to 61 residues: Small ribosomal subunit protein uS14 (61 aa).

C24, C27, C40, and C43 together coordinate Zn(2+).

This sequence belongs to the universal ribosomal protein uS14 family. Zinc-binding uS14 subfamily. In terms of assembly, part of the 30S ribosomal subunit. Contacts proteins S3 and S10. Zn(2+) serves as cofactor.

Functionally, binds 16S rRNA, required for the assembly of 30S particles and may also be responsible for determining the conformation of the 16S rRNA at the A site. This chain is Small ribosomal subunit protein uS14, found in Moorella thermoacetica (strain ATCC 39073 / JCM 9320).